Here is a 1033-residue protein sequence, read N- to C-terminus: NACHT, LRR and PYD domains-containing protein 11 (1033 aa).

The Pyrin domain occupies 1 to 91; the sequence is MAESDSTDFD…CRKIIGRRNR (91 aa). The 324-residue stretch at 147–470 folds into the NACHT domain; that stretch reads LNVFLMGERA…AFLMAVPNYL (324 aa). Position 153–160 (153–160) interacts with ATP; it reads GERASGKT. LRR repeat units follow at residues 588–611, 632–655, 745–768, 802–827, 859–882, and 919–944; these read CCHL…LIRP, MESL…ILSK, GGSL…ILCD, SPTL…TFPL, NEKL…LLCG, and LERL…LISP.

The protein belongs to the NLRP family.

Functionally, involved in inflammation. The sequence is that of NACHT, LRR and PYD domains-containing protein 11 (NLRP11) from Homo sapiens (Human).